Consider the following 349-residue polypeptide: 1-acylglycerol-3-phosphate O-acyltransferase ABHD5 (349 aa).

An N-acetylalanine modification is found at Ala-2. The region spanning 77 to 184 is the AB hydrolase-1 domain; sequence PLVLLHGFGG…LVEPWGFPER (108 aa). Ser-122 is subject to Phosphoserine. The short motif at 327-332 is the HXXXXD motif element; the sequence is HYVYAD.

The protein belongs to the peptidase S33 family. ABHD4/ABHD5 subfamily. Interacts with ADRP, PLIN and PNPLA2. Interacts with PLIN5; promotes interaction with PNPLA2.

The protein resides in the cytoplasm. The protein localises to the lipid droplet. It catalyses the reaction a 1-acyl-sn-glycero-3-phosphate + an acyl-CoA = a 1,2-diacyl-sn-glycero-3-phosphate + CoA. It carries out the reaction 1-(9Z-octadecenoyl)-sn-glycero-3-phosphate + (9Z)-octadecenoyl-CoA = 1,2-di-(9Z-octadecenoyl)-sn-glycero-3-phosphate + CoA. The enzyme catalyses 1-(9Z-octadecenoyl)-sn-glycero-3-phosphate + hexadecanoyl-CoA = 1-(9Z)-octadecenoyl-2-hexadecanoyl-sn-glycero-3-phosphate + CoA. The catalysed reaction is 1-(9Z-octadecenoyl)-sn-glycero-3-phosphate + octadecanoyl-CoA = 1-(9Z-octadecenoyl)-2-octadecanoyl-sn-glycero-3-phosphate + CoA. It catalyses the reaction 1-(9Z-octadecenoyl)-sn-glycero-3-phosphate + (5Z,8Z,11Z,14Z)-eicosatetraenoyl-CoA = 1-(9Z)-octadecenoyl-2-(5Z,8Z,11Z,14Z)-eicosatetraenoyl-sn-glycero-3-phosphate + CoA. It carries out the reaction eicosanoyl-CoA + 1-(9Z-octadecenoyl)-sn-glycero-3-phosphate = 1-(9Z)-octadecenoyl-2-eicosanoyl-sn-glycero-3-phosphate + CoA. The enzyme catalyses 1-hexadecanoyl-sn-glycero-3-phosphate + (9Z)-octadecenoyl-CoA = 1-hexadecanoyl-2-(9Z-octadecenoyl)-sn-glycero-3-phosphate + CoA. The catalysed reaction is 1-octadecanoyl-sn-glycero-3-phosphate + (9Z)-octadecenoyl-CoA = 1-octadecanoyl-2-(9Z-octadecenoyl)-sn-glycero-3-phosphate + CoA. It catalyses the reaction 1-(5Z,8Z,11Z,14Z-eicosatetraenoyl)-sn-glycero-3-phosphate + (9Z)-octadecenoyl-CoA = 1-(5Z,8Z,11Z,14Z)-eicosatetraenoyl-2-(9Z)-octadecenoyl-sn-glycero-3-phosphate + CoA. With respect to regulation, acyltransferase activity is inhibited by detergents such as Triton X-100 and 3-[(3-cholamidopropyl)dimethylammonio]-1-propanesulfonate (CHAPS). Acyltransferase activity is inhibited by the presence of magnesium and calcium. Its function is as follows. Coenzyme A-dependent lysophosphatidic acid acyltransferase that catalyzes the transfer of an acyl group on a lysophosphatidic acid. Functions preferentially with 1-oleoyl-lysophosphatidic acid followed by 1-palmitoyl-lysophosphatidic acid, 1-stearoyl-lysophosphatidic acid and 1-arachidonoyl-lysophosphatidic acid as lipid acceptor. Functions preferentially with arachidonoyl-CoA followed by oleoyl-CoA as acyl group donors. Functions in phosphatidic acid biosynthesis. May regulate the cellular storage of triacylglycerol through activation of the phospholipase PNPLA2. Involved in keratinocyte differentiation. Regulates lipid droplet fusion. The polypeptide is 1-acylglycerol-3-phosphate O-acyltransferase ABHD5 (Pongo abelii (Sumatran orangutan)).